The primary structure comprises 415 residues: Probable RAD2-like endonuclease 369L (415 aa).

An N-domain region spans residues 1–114 (MGIKNLTKFI…EDVKKKTLSL (114 aa)). Residues Asp34, Glu86, Glu198, Glu200, Asp219, Asp221, and Asp277 each contribute to the Mg(2+) site. The tract at residues 163–297 (VKQRHRYDIR…VKSYELIKVQ (135 aa)) is I-domain.

It belongs to the XPG/RAD2 endonuclease family. Mg(2+) serves as cofactor.

Its subcellular location is the host nucleus. In terms of biological role, probable endonuclease. This Acheta domesticus (House cricket) protein is Probable RAD2-like endonuclease 369L.